Consider the following 458-residue polypeptide: Brassinosteroid-related acyltransferase 1 (458 aa).

H164 acts as the Proton acceptor in catalysis.

It belongs to the plant acyltransferase family. As to expression, highly expressed in young tissues and vascular bundles. Mostly expressed in young leaves, primary roots, flowers (including petals and sepals), and siliques.

Its subcellular location is the endoplasmic reticulum. The protein localises to the nucleus. The protein operates within plant hormone biosynthesis; brassinosteroid biosynthesis. Its function is as follows. Brassinosteroids (BR) acyltransferase with acyl-CoA ligase activity toward brassinolide (BL), castasterone (CS), typhasterol (TY), 6-deoxotyphasterol (6-deoxoTY), and 6-deoxocastasterone (6-deoxoCS) and thus converts them to corresponding lauroyl esters. Regulates BR homeostasis and promotes BR-mediated cell growth regulation. Involved in vascular bundle development. This is Brassinosteroid-related acyltransferase 1 from Arabidopsis thaliana (Mouse-ear cress).